Consider the following 51-residue polypeptide: AAPPQHLCGSHLVDALYLVCGERGFFYNPKGIVEQCCHKPCNIFDLQNYCN.

Disulfide bonds link Cys8/Cys37, Cys20/Cys50, and Cys36/Cys41.

It belongs to the insulin family. Heterodimer of a B chain and an A chain linked by two disulfide bonds.

The protein resides in the secreted. Insulin decreases blood glucose concentration. It increases cell permeability to monosaccharides, amino acids and fatty acids. It accelerates glycolysis, the pentose phosphate cycle, and glycogen synthesis in liver. This Katsuwonus pelamis (Skipjack tuna) protein is Insulin-2.